The chain runs to 156 residues: Ribonuclease pancreatic (156 aa).

The signal sequence occupies residues 1-28 (MALEKSLVLLPLFVLMLLVLGWVQPSLG). Residues Lys35 and Arg38 each coordinate substrate. His40 functions as the Proton acceptor in the catalytic mechanism. N-linked (GlcNAc...) asparagine glycosylation is found at Asn50 and Asn62. 4 disulfides stabilise this stretch: Cys54/Cys112, Cys68/Cys123, Cys86/Cys138, and Cys93/Cys100. Substrate contacts are provided by residues 69–73 (KPVNT) and Lys94. Asn104 carries an N-linked (GlcNAc...) asparagine glycan. Arg113 serves as a coordination point for substrate. Asn116 carries an N-linked (GlcNAc...) asparagine glycan. His147 (proton donor) is an active-site residue.

Belongs to the pancreatic ribonuclease family. As to quaternary structure, monomer. Interacts with and forms tight 1:1 complexes with RNH1. Dimerization of two such complexes may occur. Interaction with RNH1 inhibits this protein.

Its subcellular location is the secreted. It catalyses the reaction an [RNA] containing cytidine + H2O = an [RNA]-3'-cytidine-3'-phosphate + a 5'-hydroxy-ribonucleotide-3'-[RNA].. The enzyme catalyses an [RNA] containing uridine + H2O = an [RNA]-3'-uridine-3'-phosphate + a 5'-hydroxy-ribonucleotide-3'-[RNA].. Endonuclease that catalyzes the cleavage of RNA on the 3' side of pyrimidine nucleotides. Acts on single-stranded and double-stranded RNA. The protein is Ribonuclease pancreatic (RNASE1) of Nomascus leucogenys (Northern white-cheeked gibbon).